The sequence spans 602 residues: Elongation factor 4 (602 aa).

The tr-type G domain maps to 2-184; it reads NHIRNFSIIA…AVVAKVPPPK (183 aa). Residues 14–19 and 131–134 contribute to the GTP site; these read DHGKST and NKMD.

Belongs to the TRAFAC class translation factor GTPase superfamily. Classic translation factor GTPase family. LepA subfamily.

Its subcellular location is the cell inner membrane. The catalysed reaction is GTP + H2O = GDP + phosphate + H(+). Required for accurate and efficient protein synthesis under certain stress conditions. May act as a fidelity factor of the translation reaction, by catalyzing a one-codon backward translocation of tRNAs on improperly translocated ribosomes. Back-translocation proceeds from a post-translocation (POST) complex to a pre-translocation (PRE) complex, thus giving elongation factor G a second chance to translocate the tRNAs correctly. Binds to ribosomes in a GTP-dependent manner. This chain is Elongation factor 4, found in Delftia acidovorans (strain DSM 14801 / SPH-1).